The following is a 281-amino-acid chain: Large ribosomal subunit protein uL2 (281 aa).

A disordered region spans residues 220–281 (VRGSVMNPND…RRRDGKALSK (62 aa)). Basic residues predominate over residues 258-271 (KTRKKNKQSNKMIM). Basic and acidic residues predominate over residues 272-281 (RRRDGKALSK).

The protein belongs to the universal ribosomal protein uL2 family. Part of the 50S ribosomal subunit. Forms a bridge to the 30S subunit in the 70S ribosome.

In terms of biological role, one of the primary rRNA binding proteins. Required for association of the 30S and 50S subunits to form the 70S ribosome, for tRNA binding and peptide bond formation. It has been suggested to have peptidyltransferase activity; this is somewhat controversial. Makes several contacts with the 16S rRNA in the 70S ribosome. The sequence is that of Large ribosomal subunit protein uL2 from Lachnoclostridium phytofermentans (strain ATCC 700394 / DSM 18823 / ISDg) (Clostridium phytofermentans).